Here is a 210-residue protein sequence, read N- to C-terminus: Uridine kinase (210 aa).

Residue 12–19 (GGSGSGKT) participates in ATP binding.

Belongs to the uridine kinase family.

The protein localises to the cytoplasm. It catalyses the reaction uridine + ATP = UMP + ADP + H(+). The catalysed reaction is cytidine + ATP = CMP + ADP + H(+). The protein operates within pyrimidine metabolism; CTP biosynthesis via salvage pathway; CTP from cytidine: step 1/3. It functions in the pathway pyrimidine metabolism; UMP biosynthesis via salvage pathway; UMP from uridine: step 1/1. This Bacillus pumilus (strain SAFR-032) protein is Uridine kinase.